A 248-amino-acid chain; its full sequence is Triosephosphate isomerase (248 aa).

Residues asparagine 11 and lysine 13 each contribute to the substrate site. Residue histidine 95 is the Electrophile of the active site. The Proton acceptor role is filled by glutamate 165.

The protein belongs to the triosephosphate isomerase family. As to quaternary structure, homodimer.

The protein localises to the cytoplasm. The enzyme catalyses dihydroxyacetone phosphate = methylglyoxal + phosphate. The catalysed reaction is D-glyceraldehyde 3-phosphate = dihydroxyacetone phosphate. It functions in the pathway carbohydrate degradation; glycolysis; D-glyceraldehyde 3-phosphate from glycerone phosphate: step 1/1. It participates in carbohydrate biosynthesis; gluconeogenesis. In terms of biological role, triosephosphate isomerase is an extremely efficient metabolic enzyme that catalyzes the interconversion between dihydroxyacetone phosphate (DHAP) and D-glyceraldehyde-3-phosphate (G3P) in glycolysis and gluconeogenesis. Functionally, it is also responsible for the non-negligible production of methylglyoxal a reactive cytotoxic side-product that modifies and can alter proteins, DNA and lipids. The chain is Triosephosphate isomerase (tpi1) from Xenopus laevis (African clawed frog).